The chain runs to 438 residues: L-cysteine:1D-myo-inositol 2-amino-2-deoxy-alpha-D-glucopyranoside ligase (438 aa).

Residues 1–27 (MKSWSSRPVPELPGTGTAPRVHDTSTG) are disordered. Cysteine 44 is a Zn(2+) binding site. L-cysteinyl-5'-AMP-binding positions include 44 to 47 (CGIT), threonine 59, and 82 to 84 (NVT). Positions 46–56 (ITPYDATHMGH) match the 'HIGH' region motif. Positions 208 to 213 (DHGGDP) match the 'ERGGDP' region motif. Residue tryptophan 249 coordinates L-cysteinyl-5'-AMP. Zn(2+) is bound at residue cysteine 253. 271–273 (GSD) contacts L-cysteinyl-5'-AMP. Histidine 278 contributes to the Zn(2+) binding site. Valine 304 serves as a coordination point for L-cysteinyl-5'-AMP. The 'KMSKS' region motif lies at 310–314 (KMSKS).

The protein belongs to the class-I aminoacyl-tRNA synthetase family. MshC subfamily. Monomer. Zn(2+) serves as cofactor.

The enzyme catalyses 1D-myo-inositol 2-amino-2-deoxy-alpha-D-glucopyranoside + L-cysteine + ATP = 1D-myo-inositol 2-(L-cysteinylamino)-2-deoxy-alpha-D-glucopyranoside + AMP + diphosphate + H(+). Functionally, catalyzes the ATP-dependent condensation of GlcN-Ins and L-cysteine to form L-Cys-GlcN-Ins. This is L-cysteine:1D-myo-inositol 2-amino-2-deoxy-alpha-D-glucopyranoside ligase from Kocuria rhizophila (strain ATCC 9341 / DSM 348 / NBRC 103217 / DC2201).